A 741-amino-acid chain; its full sequence is DNA ligase (741 aa).

NAD(+) contacts are provided by residues 78-82 (DADYD), 127-128 (SL), and Glu-161. Residue Lys-163 is the N6-AMP-lysine intermediate of the active site. Residues Arg-184, Glu-219, Lys-335, and Lys-359 each coordinate NAD(+). 4 residues coordinate Zn(2+): Cys-464, Cys-467, Cys-482, and Cys-488. One can recognise a BRCT domain in the interval 662–741 (VGDSPVAGKT…DAWRVLAGLA (80 aa)).

It belongs to the NAD-dependent DNA ligase family. LigA subfamily. Mg(2+) serves as cofactor. The cofactor is Mn(2+).

It carries out the reaction NAD(+) + (deoxyribonucleotide)n-3'-hydroxyl + 5'-phospho-(deoxyribonucleotide)m = (deoxyribonucleotide)n+m + AMP + beta-nicotinamide D-nucleotide.. In terms of biological role, DNA ligase that catalyzes the formation of phosphodiester linkages between 5'-phosphoryl and 3'-hydroxyl groups in double-stranded DNA using NAD as a coenzyme and as the energy source for the reaction. It is essential for DNA replication and repair of damaged DNA. This chain is DNA ligase, found in Dinoroseobacter shibae (strain DSM 16493 / NCIMB 14021 / DFL 12).